We begin with the raw amino-acid sequence, 1584 residues long: Adhesion G protein-coupled receptor B1 (1584 aa).

The signal sequence occupies residues 1 to 30 (MRGQAAAPGPVWILAPLLLLLLLLGRRARA). Over 31–948 (AAGADAGPGP…ANMEKATLPS (918 aa)) the chain is Extracellular. Residue asparagine 64 is glycosylated (N-linked (GlcNAc...) asparagine). The disordered stretch occupies residues 146-167 (RRQQPPQHDGLRPRAGPPGPTD). A TSP type-1 1 domain is found at 261 to 315 (TGGWKLWSLWGECTRDCGGGLQTRTRTCLPAPGVEGGGCEGVLEEGRQCNREACG). 3 cysteine pairs are disulfide-bonded: cysteine 273/cysteine 309, cysteine 277/cysteine 314, and cysteine 288/cysteine 299. Residues 313–335 (ACGPAGRTSSRSQSLRSTDARRR) form a disordered region. Residues 319 to 329 (RTSSRSQSLRS) show a composition bias toward low complexity. 4 TSP type-1 domains span residues 354–407 (DPAA…AVCP), 409–462 (HGAW…ALCP), 467–520 (DGNW…QQCP), and 522–575 (DGKW…QRCP). Disulfide bonds link cysteine 366–cysteine 400, cysteine 370–cysteine 406, cysteine 381–cysteine 390, cysteine 421–cysteine 456, cysteine 425–cysteine 461, cysteine 436–cysteine 446, cysteine 479–cysteine 514, cysteine 483–cysteine 519, cysteine 494–cysteine 504, cysteine 534–cysteine 569, cysteine 538–cysteine 574, cysteine 549–cysteine 559, cysteine 581–cysteine 616, and cysteine 604–cysteine 634. Asparagine 401 carries N-linked (GlcNAc...) asparagine glycosylation. N-linked (GlcNAc...) asparagine glycosylation occurs at asparagine 607. At threonine 609 the chain carries Phosphothreonine. N-linked (GlcNAc...) asparagine glycans are attached at residues asparagine 692, asparagine 844, asparagine 877, and asparagine 881. The region spanning 760-939 (RDAYQVTDNL…AILAQLSADA (180 aa)) is the GAIN-B domain. 2 disulfide bridges follow: cysteine 884-cysteine 921 and cysteine 909-cysteine 923. The interval 884–939 (CILWDETDVPSSSAPPQLGPWSWRGCRTVPLDALRTRCLCDRLSTFAILAQLSADA) is GPS. The tract at residues 927–943 (STFAILAQLSADANMEK) is N-terminal stalk following vasculostatin-120 cleavage which is not required for signaling activity. The chain crosses the membrane as a helical span at residues 949–969 (VTLIVGCGVSSLTLLMLVIIY). The Cytoplasmic segment spans residues 970 to 980 (VSVWRYIRSER). Residues 981–1001 (SVILINFCLSIISSNALILIG) traverse the membrane as a helical segment. Residues 1002–1008 (QTQTRNK) are Extracellular-facing. The helical transmembrane segment at 1009-1029 (VVCTLVAAFLHFFFLSSFCWV) threads the bilayer. Over 1030–1052 (LTEAWQSYMAVTGHLRNRLIRKR) the chain is Cytoplasmic. A helical membrane pass occupies residues 1053–1073 (FLCLGWGLPALVVAISVGFTK). Over 1074 to 1093 (AKGYSTMNYCWLSLEGGLLY) the chain is Extracellular. A helical transmembrane segment spans residues 1094–1114 (AFVGPAAAVVLVNMVIGILVF). The Cytoplasmic portion of the chain corresponds to 1115–1136 (NKLVSKDGITDKKLKERAGASL). Residues 1137–1157 (WSSCVVLPLLALTWMSAVLAV) traverse the membrane as a helical segment. The Extracellular portion of the chain corresponds to 1158–1166 (TDRRSALFQ). Residues 1167-1187 (ILFAVFDSLEGFVIVMVHCIL) form a helical membrane-spanning segment. Residues 1188–1584 (RREVQDAVKC…QDIIDLQTEV (397 aa)) lie on the Cytoplasmic side of the membrane. Residues 1365–1584 (YSIHIDQMPQ…QDIIDLQTEV (220 aa)) form an involved in interaction with MAGI1 region. Disordered stretches follow at residues 1385 to 1475 (EASL…RRKS) and 1501 to 1548 (RKLQ…KKEL). Residues 1391 to 1439 (RSPPSRQPPSGGPPEAPPAQPPPPPPPPPPPPQQPLPPPPNLEPAPPSL) show a composition bias toward pro residues. A compositionally biased stretch (polar residues) spans 1453–1469 (TGPSTKNENVATLSVSS). At serine 1469 the chain carries Phosphoserine. The span at 1501–1522 (RKLQHAAEKDKEVLGPDSKPEK) shows a compositional bias: basic and acidic residues. The segment at 1581–1584 (QTEV) is indispensable for interaction with MAGI1.

The protein belongs to the G-protein coupled receptor 2 family. LN-TM7 subfamily. Interacts with ELMO1 and DOCK. When bound to ELMO1 and DOCK1, acts as a module to promote apoptotic cell engulfment. Interacts with MDM2; the interaction results in inhibition of MDM2-mediated ubiquitination and degradation of DLG4/PSD95. Interacts with PARD3 and TIAM1; the interaction is required for correct dendritic. localization of PARD3 and TIAM1 and for dendritic spine formation. Interacts with MAGI1. Interacts with MAGI3. Interacts with BAIAP2. Interacts with PHYHIP. Interacts with DLG4 (via PDZ domain). Vasculostatin-120: Interacts with CD36. Vasculostatin-120: Interacts with ARRB2. Interacts with BAIAP3; this interaction is direct. In terms of processing, proteolytically cleaved to produce vasculostatin-40 and vasculostatin-120. Vasculostatin-40 is the major form and is produced through proteolytic cleavage by MMP14 between residues 321 and 329 with cleavage likely to be between Ser-326 and Leu-327. Post-translationally, ubiquitinated. As to expression, expressed in brain (at protein level). Expressed on mononuclear phagocytes and monocyte-derived macrophages in the gastric mucosa (at protein level). Expressed in normal pancreatic tissue but not in pancreatic tumor tissue. Reduced or no expression is observed in some glioblastomas.

It localises to the cell membrane. The protein localises to the cell projection. It is found in the phagocytic cup. The protein resides in the cell junction. Its subcellular location is the focal adhesion. It localises to the dendritic spine. The protein localises to the postsynaptic density. It is found in the secreted. Phosphatidylserine receptor which enhances the engulfment of apoptotic cells. Also mediates the binding and engulfment of Gram-negative bacteria. Stimulates production of reactive oxygen species by macrophages in response to Gram-negative bacteria, resulting in enhanced microbicidal macrophage activity. In the gastric mucosa, required for recognition and engulfment of apoptotic gastric epithelial cells. Promotes myoblast fusion. Activates the Rho pathway in a G-protein-dependent manner. Inhibits MDM2-mediated ubiquitination and degradation of DLG4/PSD95, promoting DLG4 stability and regulating synaptic plasticity. Required for the formation of dendritic spines by ensuring the correct localization of PARD3 and TIAM1. Potent inhibitor of angiogenesis in brain and may play a significant role as a mediator of the p53/TP53 signal in suppression of glioblastoma. In terms of biological role, inhibits angiogenesis in a CD36-dependent manner. Its function is as follows. Inhibits angiogenesis. In Homo sapiens (Human), this protein is Adhesion G protein-coupled receptor B1.